A 180-amino-acid chain; its full sequence is NAD(P)H-quinone oxidoreductase subunit I, chloroplastic (180 aa).

2 consecutive 4Fe-4S ferredoxin-type domains span residues 55-84 (GRIH…VDWR) and 95-124 (LNYS…MTEE). 8 residues coordinate [4Fe-4S] cluster: Cys64, Cys67, Cys70, Cys74, Cys104, Cys107, Cys110, and Cys114.

This sequence belongs to the complex I 23 kDa subunit family. As to quaternary structure, NDH is composed of at least 16 different subunits, 5 of which are encoded in the nucleus. Requires [4Fe-4S] cluster as cofactor.

It is found in the plastid. Its subcellular location is the chloroplast thylakoid membrane. The catalysed reaction is a plastoquinone + NADH + (n+1) H(+)(in) = a plastoquinol + NAD(+) + n H(+)(out). It catalyses the reaction a plastoquinone + NADPH + (n+1) H(+)(in) = a plastoquinol + NADP(+) + n H(+)(out). Its function is as follows. NDH shuttles electrons from NAD(P)H:plastoquinone, via FMN and iron-sulfur (Fe-S) centers, to quinones in the photosynthetic chain and possibly in a chloroplast respiratory chain. The immediate electron acceptor for the enzyme in this species is believed to be plastoquinone. Couples the redox reaction to proton translocation, and thus conserves the redox energy in a proton gradient. The polypeptide is NAD(P)H-quinone oxidoreductase subunit I, chloroplastic (Agrostis stolonifera (Creeping bentgrass)).